The sequence spans 438 residues: Keratin, type I cytoskeletal 13 (438 aa).

The segment at 1 to 95 is head; the sequence is MSCRFQSSSM…SVDGGLLSGN (95 aa). Residues R27 and R35 each carry the omega-N-methylarginine modification. Positions 96–131 are coil; sequence EKITMQNLNDRLASYLEKVRALEAANADLEVKIRDW. The IF rod domain occupies 96-408; sequence EKITMQNLND…SLLEGQDAKM (313 aa). The linker 1 stretch occupies residues 132 to 150; that stretch reads HLKQSPTSPERDYSAYYKT. Residues 151–242 form a coil 1B region; the sequence is IEELRIKILE…KNHEEEMKEF (92 aa). Residues 243-265 form a linker 12 region; that stretch reads SNQAVGQVNVEMDATPGIDLTRV. Positions 266–404 are coil 2; it reads LAEMREQYEA…ATYRSLLEGQ (139 aa). Residues 405-438 form a tail region; sequence DAKMTGFNTGGNSTTTSNTSTSPSTSGRPDFRKY. Positions 408-438 are disordered; sequence MTGFNTGGNSTTTSNTSTSPSTSGRPDFRKY. Positions 409–431 are enriched in low complexity; that stretch reads TGFNTGGNSTTTSNTSTSPSTSG.

The protein belongs to the intermediate filament family. As to quaternary structure, heterotetramer of two type I and two type II keratins. In terms of processing, O-glycosylated; glycans consist of single N-acetylglucosamine residues.

Its function is as follows. Type 1 keratin. Maintains postnatal tongue mucosal cell homeostasis and tissue organization in response to mechanical stress, potentially via regulation of the G1/S phase cyclins CCNE1 and CCNE2. The sequence is that of Keratin, type I cytoskeletal 13 from Rattus norvegicus (Rat).